The following is a 36-amino-acid chain: uncharacterized protein (36 aa).

This is an uncharacterized protein from Haemophilus influenzae (strain ATCC 51907 / DSM 11121 / KW20 / Rd).